We begin with the raw amino-acid sequence, 136 residues long: MARTKQTARKSTGGKAPRKQLATKAARKSAPATGGVKKPHRYRPGTVTLREIRRYQKSTELLIRKLPFQRLVREIAQDFKTDLRFQSSAVMALQEASEAYLVGLFEDTNLCAIHAKRVTIMPKDIQLARRIRGERA.

Residues 1 to 45 form a disordered region; sequence MARTKQTARKSTGGKAPRKQLATKAARKSAPATGGVKKPHRYRPG. The residue at position 3 (Arg3) is an Asymmetric dimethylarginine; by PRMT6; alternate. At Arg3 the chain carries Citrulline; alternate. Thr4 carries the phosphothreonine; by HASPIN and VRK1 modification. Position 5 is an allysine; alternate (Lys5). Lys5 carries the N6,N6,N6-trimethyllysine; alternate modification. Lys5 is subject to N6,N6-dimethyllysine; alternate. Lys5 bears the N6-(2-hydroxyisobutyryl)lysine; alternate mark. Position 5 is an N6-(beta-hydroxybutyryl)lysine; alternate (Lys5). Residue Lys5 is modified to N6-acetyllysine; alternate. An N6-crotonyllysine; alternate modification is found at Lys5. The residue at position 5 (Lys5) is an N6-methyllysine; alternate. A 5-glutamyl dopamine; alternate modification is found at Gln6. At Gln6 the chain carries 5-glutamyl serotonin; alternate. Thr7 is modified (phosphothreonine; by PKC). Arg9 bears the Citrulline; alternate mark. The residue at position 9 (Arg9) is a Symmetric dimethylarginine; by PRMT5; alternate. Lys10 is subject to N6,N6,N6-trimethyllysine; alternate. Lys10 is modified (N6,N6-dimethyllysine; alternate). Lys10 carries the N6-(2-hydroxyisobutyryl)lysine; alternate modification. The residue at position 10 (Lys10) is an N6-(beta-hydroxybutyryl)lysine; alternate. At Lys10 the chain carries N6-acetyllysine; alternate. The residue at position 10 (Lys10) is an N6-crotonyllysine; alternate. Lys10 bears the N6-methyllysine; alternate mark. Lys10 bears the N6-lactoyllysine; alternate mark. At Ser11 the chain carries ADP-ribosylserine; alternate. Phosphoserine; alternate; by AURKB, AURKC, RPS6KA3, RPS6KA4 and RPS6KA5 is present on Ser11. A Phosphothreonine; by PKC modification is found at Thr12. Residue Lys15 is modified to N6-(2-hydroxyisobutyryl)lysine; alternate. Lys15 carries the post-translational modification N6-(beta-hydroxybutyryl)lysine; alternate. Lys15 carries the N6-acetyllysine; alternate modification. N6-lactoyllysine; alternate is present on Lys15. Lys15 carries the N6-glutaryllysine; alternate modification. The residue at position 15 (Lys15) is an N6-succinyllysine; alternate. Arg18 carries the post-translational modification Citrulline; alternate. Position 18 is an asymmetric dimethylarginine; by CARM1; alternate (Arg18). Residues Lys19 and Lys24 each carry the N6-(2-hydroxyisobutyryl)lysine; alternate modification. Lys19 and Lys24 each carry N6-(beta-hydroxybutyryl)lysine; alternate. Residues Lys19 and Lys24 each carry the N6-acetyllysine; alternate modification. N6-crotonyllysine; alternate is present on residues Lys19 and Lys24. Lys19 and Lys24 each carry N6-methyllysine; alternate. N6-lactoyllysine; alternate is present on residues Lys19 and Lys24. Residues Lys19 and Lys24 each carry the N6-glutaryllysine; alternate modification. Lys19 and Lys24 each carry N6-butyryllysine; alternate. Lys19 carries the N6-decanoyllysine lipid modification. Arg27 carries the citrulline modification. The residue at position 28 (Lys28) is an N6,N6,N6-trimethyllysine; alternate. Lys28 is modified (N6,N6-dimethyllysine; alternate). Lys28 bears the N6-(2-hydroxyisobutyryl)lysine; alternate mark. Lys28 carries the N6-acetyllysine; alternate modification. Lys28 carries the post-translational modification N6-crotonyllysine; alternate. N6-methyllysine; alternate is present on Lys28. Lys28 bears the N6-lactoyllysine; alternate mark. Lys28 is subject to N6-glutaryllysine; alternate. Position 29 is an ADP-ribosylserine; alternate (Ser29). Ser29 is subject to Phosphoserine; alternate; by AURKB, AURKC and RPS6KA5. An N6,N6,N6-trimethyllysine; alternate modification is found at Lys37. Lys37 is modified (N6,N6-dimethyllysine; alternate). N6-(2-hydroxyisobutyryl)lysine; alternate is present on Lys37. An N6-acetyllysine; alternate modification is found at Lys37. An N6-methyllysine; alternate modification is found at Lys37. Position 38 is an N6-methyllysine (Lys38). At Tyr42 the chain carries Phosphotyrosine. Lys57 bears the N6,N6,N6-trimethyllysine; alternate mark. Lys57 carries the N6-(2-hydroxyisobutyryl)lysine; alternate modification. At Lys57 the chain carries N6-(beta-hydroxybutyryl)lysine; alternate. At Lys57 the chain carries N6-acetyllysine; alternate. Lys57 is subject to N6-crotonyllysine; alternate. Position 57 is an N6-lactoyllysine; alternate (Lys57). Lys57 is modified (N6-glutaryllysine; alternate). Lys57 carries the N6-succinyllysine; alternate modification. The residue at position 57 (Lys57) is an N6-methyllysine; by EHMT2; alternate. Ser58 carries the phosphoserine modification. N6-(2-hydroxyisobutyryl)lysine; alternate is present on residues Lys65 and Lys80. Lys65 and Lys80 each carry N6-methyllysine; alternate. Lys80 is subject to N6,N6,N6-trimethyllysine; alternate. Residue Lys80 is modified to N6,N6-dimethyllysine; alternate. N6-acetyllysine; alternate is present on Lys80. An N6-lactoyllysine; alternate modification is found at Lys80. N6-glutaryllysine; alternate is present on Lys80. Lys80 carries the N6-succinyllysine; alternate modification. Thr81 is subject to Phosphothreonine. Ser87 carries the post-translational modification Phosphoserine. Thr108 carries the phosphothreonine modification. Residue Cys111 is the site of S-palmitoyl cysteine attachment. Lys116 and Lys123 each carry N6-acetyllysine; alternate. N6-glutaryllysine; alternate occurs at positions 116 and 123. Position 123 is an N6-(2-hydroxyisobutyryl)lysine; alternate (Lys123). Lys123 is modified (N6-methyllysine; alternate). Lys123 is modified (N6-succinyllysine; alternate).

It belongs to the histone H3 family. The nucleosome is a histone octamer containing two molecules each of H2A, H2B, H3 and H4 assembled in one H3-H4 heterotetramer and two H2A-H2B heterodimers. The octamer wraps approximately 147 bp of DNA. During nucleosome assembly the chaperone ASF1A interacts with the histone H3-H4 heterodimer (via C-terminus of H3); this interaction is direct. Interacts with DNAJC9, CHAF1A and CHAF1B. Interacts with NASP; NASP is a histone chaperone that stabilizes and maintains a soluble pool of Histone H3-H4 dimers. Acetylation is generally linked to gene activation. Acetylation on Lys-10 (H3K9ac) impairs methylation at Arg-9 (H3R8me2s). Acetylation on Lys-19 (H3K18ac) and Lys-24 (H3K24ac) favors methylation at Arg-18 (H3R17me). Acetylation at Lys-123 (H3K122ac) by EP300/p300 plays a central role in chromatin structure: localizes at the surface of the histone octamer and stimulates transcription, possibly by promoting nucleosome instability. In terms of processing, citrullination at Arg-9 (H3R8ci) and/or Arg-18 (H3R17ci) by PADI4 impairs methylation and represses transcription. Post-translationally, asymmetric dimethylation at Arg-18 (H3R17me2a) by CARM1 is linked to gene activation. Symmetric dimethylation at Arg-9 (H3R8me2s) by PRMT5 is linked to gene repression. Asymmetric dimethylation at Arg-3 (H3R2me2a) by PRMT6 is linked to gene repression and is mutually exclusive with H3 Lys-5 methylation (H3K4me2 and H3K4me3). H3R2me2a is present at the 3' of genes regardless of their transcription state and is enriched on inactive promoters, while it is absent on active promoters. Methylation at Lys-5 (H3K4me), Lys-37 (H3K36me) and Lys-80 (H3K79me) are linked to gene activation. Methylation at Lys-5 (H3K4me) facilitates subsequent acetylation of H3 and H4. Methylation at Lys-80 (H3K79me) is associated with DNA double-strand break (DSB) responses and is a specific target for TP53BP1. Methylation at Lys-10 (H3K9me) and Lys-28 (H3K27me) are linked to gene repression. Methylation at Lys-10 (H3K9me) is a specific target for HP1 proteins (CBX1, CBX3 and CBX5) and prevents subsequent phosphorylation at Ser-11 (H3S10ph) and acetylation of H3 and H4. Methylation at Lys-5 (H3K4me) and Lys-80 (H3K79me) require preliminary monoubiquitination of H2B at 'Lys-120'. Methylation at Lys-10 (H3K9me) and Lys-28 (H3K27me) are enriched in inactive X chromosome chromatin. Monomethylation at Lys-57 (H3K56me1) by EHMT2/G9A in G1 phase promotes interaction with PCNA and is required for DNA replication. In terms of processing, phosphorylated at Thr-4 (H3T3ph) by VRK1. Phosphorylated at Thr-4 (H3T3ph) by HASPIN during prophase and dephosphorylated during anaphase. Phosphorylation at Ser-11 (H3S10ph) by AURKB is crucial for chromosome condensation and cell-cycle progression during mitosis and meiosis. In addition phosphorylation at Ser-11 (H3S10ph) by RPS6KA4 and RPS6KA5 is important during interphase because it enables the transcription of genes following external stimulation, like mitogens, stress, growth factors or UV irradiation and result in the activation of genes, such as c-fos and c-jun. Phosphorylation at Ser-11 (H3S10ph), which is linked to gene activation, prevents methylation at Lys-10 (H3K9me) but facilitates acetylation of H3 and H4. Phosphorylation at Ser-11 (H3S10ph) by AURKB mediates the dissociation of HP1 proteins (CBX1, CBX3 and CBX5) from heterochromatin. Phosphorylation at Ser-11 (H3S10ph) is also an essential regulatory mechanism for neoplastic cell transformation. Phosphorylated at Ser-29 (H3S28ph) by MAP3K20 isoform 1, RPS6KA5 or AURKB during mitosis or upon ultraviolet B irradiation. Phosphorylation at Thr-7 (H3T6ph) by PRKCB is a specific tag for epigenetic transcriptional activation that prevents demethylation of Lys-5 (H3K4me) by LSD1/KDM1A. At centromeres, specifically phosphorylated at Thr-12 (H3T11ph) from prophase to early anaphase, by DAPK3 and PKN1. Phosphorylation at Thr-12 (H3T11ph) by PKN1 or isoform M2 of PKM (PKM2) is a specific tag for epigenetic transcriptional activation that promotes demethylation of Lys-10 (H3K9me) by KDM4C/JMJD2C. Phosphorylation at Tyr-42 (H3Y41ph) by JAK2 promotes exclusion of CBX5 (HP1 alpha) from chromatin. Post-translationally, monoubiquitinated by RAG1 in lymphoid cells, monoubiquitination is required for V(D)J recombination. Ubiquitinated by the CUL4-DDB-RBX1 complex in response to ultraviolet irradiation. This may weaken the interaction between histones and DNA and facilitate DNA accessibility to repair proteins. Lysine deamination at Lys-5 (H3K4all) to form allysine is mediated by LOXL2. Allysine formation by LOXL2 only takes place on H3K4me3 and results in gene repression. In terms of processing, crotonylation (Kcr) is specifically present in male germ cells and marks testis-specific genes in post-meiotic cells, including X-linked genes that escape sex chromosome inactivation in haploid cells. Crotonylation marks active promoters and enhancers and confers resistance to transcriptional repressors. It is also associated with post-meiotically activated genes on autosomes. Post-translationally, butyrylation of histones marks active promoters and competes with histone acetylation. It is present during late spermatogenesis. Succinylation at Lys-80 (H3K79succ) by KAT2A takes place with a maximum frequency around the transcription start sites of genes. It gives a specific tag for epigenetic transcription activation. Desuccinylation at Lys-123 (H3K122succ) by SIRT7 in response to DNA damage promotes chromatin condensation and double-strand breaks (DSBs) repair. In terms of processing, serine ADP-ribosylation by PARP1 or PARP2 constitutes the primary form of ADP-ribosylation of proteins in response to DNA damage. Serine ADP-ribosylation at Ser-11 (H3S10ADPr) promotes recruitment of CHD1L. H3S10ADPr is mutually exclusive with phosphorylation at Ser-11 (H3S10ph) and impairs acetylation at Lys-10 (H3K9ac). Post-translationally, serotonylated by TGM2 at Gln-6 (H3Q5ser) during serotonergic neuron differentiation. H3Q5ser is associated with trimethylation of Lys-5 (H3K4me3) and enhances general transcription factor IID (TFIID) complex-binding to H3K4me3, thereby facilitating transcription. Dopaminylated by TGM2 at Gln-6 (H3Q5dop) in ventral tegmental area (VTA) neurons. H3Q5dop mediates neurotransmission-independent role of nuclear dopamine by regulating relapse-related transcriptional plasticity in the reward system. In terms of processing, lactylated in macrophages by EP300/P300 by using lactoyl-CoA directly derived from endogenous or exogenous lactate, leading to stimulates gene transcription.

The protein localises to the nucleus. Its subcellular location is the chromosome. Its function is as follows. Core component of nucleosome. Nucleosomes wrap and compact DNA into chromatin, limiting DNA accessibility to the cellular machineries which require DNA as a template. Histones thereby play a central role in transcription regulation, DNA repair, DNA replication and chromosomal stability. DNA accessibility is regulated via a complex set of post-translational modifications of histones, also called histone code, and nucleosome remodeling. The chain is Histone H3.2 from Cricetulus longicaudatus (Long-tailed dwarf hamster).